The primary structure comprises 365 residues: Phospho-N-acetylmuramoyl-pentapeptide-transferase (365 aa).

Transmembrane regions (helical) follow at residues 15 to 35 (WPAAILIGAVISAAFVADRLI), 39 to 59 (LLSLPLMAAILVSTLITWWGV), 84 to 104 (GTPTMGGLLVVPVGVIIGGLV), 114 to 134 (LLAIALVTLAYMVIGGVDDWS), 156 to 176 (AAVLFLGWAGWQGWIAGTVSL), 178 to 198 (FNLDLPLHWLIWPLALFVFLA), 209 to 229 (LDGLASGCGALVFTGLALQLM), 235 to 255 (GDPALAGFCMAMAGCWLGFLI), 263 to 283 (VFMGDTGSLAMGAALSAVALL), 291 to 311 (LLMGGVFLAESVSVIVQVWVF), and 343 to 363 (VVVPLFWLVTAGLVMLGLGLH).

The protein belongs to the glycosyltransferase 4 family. MraY subfamily. The cofactor is Mg(2+).

Its subcellular location is the cell inner membrane. The catalysed reaction is UDP-N-acetyl-alpha-D-muramoyl-L-alanyl-gamma-D-glutamyl-meso-2,6-diaminopimeloyl-D-alanyl-D-alanine + di-trans,octa-cis-undecaprenyl phosphate = di-trans,octa-cis-undecaprenyl diphospho-N-acetyl-alpha-D-muramoyl-L-alanyl-D-glutamyl-meso-2,6-diaminopimeloyl-D-alanyl-D-alanine + UMP. The protein operates within cell wall biogenesis; peptidoglycan biosynthesis. Catalyzes the initial step of the lipid cycle reactions in the biosynthesis of the cell wall peptidoglycan: transfers peptidoglycan precursor phospho-MurNAc-pentapeptide from UDP-MurNAc-pentapeptide onto the lipid carrier undecaprenyl phosphate, yielding undecaprenyl-pyrophosphoryl-MurNAc-pentapeptide, known as lipid I. The polypeptide is Phospho-N-acetylmuramoyl-pentapeptide-transferase (Synechococcus sp. (strain WH7803)).